A 579-amino-acid chain; its full sequence is Peptidyl-prolyl cis-trans isomerase-like 2 (579 aa).

A U-box domain is found at 42–115 (RRLPFNFCSL…GEYVDPVTYK (74 aa)). The interval 227–261 (AERAQRAESGAASKGLTKPGMSATAASQKTVSHQA) is disordered. Polar residues predominate over residues 250–259 (TAASQKTVSH). The PPIase cyclophilin-type domain occupies 311-470 (QKGYARISTT…PDIRIKDVTI (160 aa)). The segment at 555-579 (EGPEPEPAKKKFKGGGGFGDFSSWD) is disordered.

This sequence belongs to the cyclophilin-type PPIase family. PPIL2 subfamily.

It localises to the nucleus. It catalyses the reaction [protein]-peptidylproline (omega=180) = [protein]-peptidylproline (omega=0). The catalysed reaction is S-ubiquitinyl-[E2 ubiquitin-conjugating enzyme]-L-cysteine + [acceptor protein]-L-lysine = [E2 ubiquitin-conjugating enzyme]-L-cysteine + N(6)-ubiquitinyl-[acceptor protein]-L-lysine.. Its pathway is protein modification; protein ubiquitination. In terms of biological role, may catalyze the cis-trans isomerization of proline imidic peptide bonds in oligopeptides thereby assisting the folding of proteins. May also function as a chaperone, playing a role in intracellular transport of proteins. May also have a protein ubiquitin ligase activity acting as an E3 ubiquitin protein ligase or as a ubiquitin-ubiquitin ligase promoting elongation of ubiquitin chains on proteins. The protein is Peptidyl-prolyl cis-trans isomerase-like 2 (cyp8) of Aspergillus fumigatus (strain ATCC MYA-4609 / CBS 101355 / FGSC A1100 / Af293) (Neosartorya fumigata).